The following is a 426-amino-acid chain: Pannexin-1 (426 aa).

Topologically, residues 1 to 40 are cytoplasmic; it reads MAIAHLATEYVFSDFLLKEPTEPKFKGLRLELAVDKMVTC. S-nitrosocysteine is present on Cys-40. A helical membrane pass occupies residues 41-61; the sequence is IAVGLPLLLISLAFAQEISIG. The Extracellular segment spans residues 62–106; the sequence is TQISCFSPSSFSWRQAAFVDSYCWAAVQQKNSLQSESGNLPLWLH. 2 cysteine pairs are disulfide-bonded: Cys-66–Cys-264 and Cys-84–Cys-245. The helical transmembrane segment at 107-127 threads the bilayer; that stretch reads KFFPYILLLFAILLYLPALFW. At 128–216 the chain is on the cytoplasmic side; the sequence is RFAAAPHLCS…HLIMKYISCR (89 aa). Tyr-198 is modified (phosphotyrosine). A helical membrane pass occupies residues 217-237; the sequence is LVTFAVVLLACIYLSYYFSLS. The Extracellular portion of the chain corresponds to 238 to 277; it reads SLSDEFLCSIKSGVLRNDSTIPDSFQCKLIAVGIFQLLSL. N-linked (GlcNAc...) asparagine glycosylation occurs at Asn-254. A helical membrane pass occupies residues 278-298; the sequence is INLLVYALLVPVVIYTLFVPF. The Cytoplasmic segment spans residues 299–426; that stretch reads RQKTDVLKVY…SRQRLLNSSC (128 aa). Residue Cys-346 is modified to S-nitrosocysteine. The disordered stretch occupies residues 407-426; it reads ETAANNGEKNSRQRLLNSSC.

Belongs to the pannexin family. As to quaternary structure, homoheptameric. In terms of processing, S-nitrosylation inhibits channel currents and ATP release. Post-translationally, N-glycosylation plays a role in cell surface targeting. Glycosylation at its extracellular surface makes unlikely that two oligomers could dock to form an intercellular channel such as in gap junctions. Exists in three glycosylation states: non-glycosylated (GLY0), high-mannose glycosylated (GLY1), and fully mature glycosylated (GLY2). Cleaved by CASP3 and CASP7 during apoptosis. Cleavage opens the channel for the release of metabolites and induces plasma membrane permeability during apoptosis. In terms of processing, phosphorylated at Tyr-198 by SRC. Phosphorylation activates ATP release. Constitutively phosphorylated in vascular smooth muscle cells. In terms of tissue distribution, expressed in the eye, thyroid, prostate, kidney and liver. Abundantly expressed in the CNS, including hippocampus, olfactory bulb, cortex, cerebellum and white matter.

It localises to the cell membrane. The protein localises to the endoplasmic reticulum membrane. It carries out the reaction Ca(2+)(in) = Ca(2+)(out). The catalysed reaction is ATP(in) = ATP(out). The enzyme catalyses K(+)(in) = K(+)(out). It catalyses the reaction chloride(in) = chloride(out). It carries out the reaction iodide(out) = iodide(in). The catalysed reaction is Na(+)(in) = Na(+)(out). The enzyme catalyses nitrate(in) = nitrate(out). It catalyses the reaction L-aspartate(out) = L-aspartate(in). It carries out the reaction L-glutamate(out) = L-glutamate(in). The catalysed reaction is D-gluconate(in) = D-gluconate(out). The enzyme catalyses spermidine(in) = spermidine(out). In terms of biological role, ion channel involved in a variety of physiological functions such as blood pressure regulation, apoptotic cell clearance and oogenesis. Forms anion-selective channels with relatively low conductance and an order of permeabilities: nitrate&gt;iodide&gt;chlroride&gt;&gt;aspartate=glutamate=gluconate. Can release ATP upon activation through phosphorylation or cleavage at C-terminus. May play a role as a Ca(2+)-leak channel to regulate ER Ca(2+) homeostasis. Its function is as follows. During apoptosis, the C terminal tail is cleaved by caspases, which opens the main pore acting as a large-pore ATP efflux channel with a broad distribution, which allows the regulated release of molecules and ions smaller than 1 kDa, such as nucleotides ATP and UTP, and selective plasma membrane permeability to attract phagocytes that engulf the dying cells. The protein is Pannexin-1 (Panx1) of Rattus norvegicus (Rat).